A 255-amino-acid chain; its full sequence is Reticulon-like protein B3 (255 aa).

The segment covering 1-25 has biased composition (basic and acidic residues); that stretch reads MAEEHKHEESIMEKISEKIHGHDDS. Positions 1 to 38 are disordered; that stretch reads MAEEHKHEESIMEKISEKIHGHDDSSSSSSDSDDDKNS. Ala-2 is modified (N-acetylalanine). Residues 64–255 enclose the Reticulon domain; it reads PADIFLWRNK…GAFAFIKKKD (192 aa). A run of 3 helical transmembrane segments spans residues 75-95, 97-117, and 186-206; these read VSGG…LLEY, LLTL…LWSS, and CNFL…PVLY.

It localises to the endoplasmic reticulum membrane. The protein localises to the vacuole membrane. The chain is Reticulon-like protein B3 (RTNLB3) from Arabidopsis thaliana (Mouse-ear cress).